Reading from the N-terminus, the 860-residue chain is MLWKRWTLAVTIVVLQLAAVLLFARGFLPSRVLLPGYTESRVSTEAPFQKAIIMVVDAFRSDFAFSDQSNCPQLHKRINSGGAIPFTAHSTPPTVTLPRIKGLTTGSTPNFLDAVLNIAESDNSSTLANQDSWLAQASRDGRKIHMFGDDTWIKLFPGMFDDCEGTASFFVSDYTEVDNNVTRHIDTQLDQKTEWDVLILHYLGLDHIGHKTGPESPFMPAKQKEMDDIFDKLYNSCDDDTVLILLGDHGMNEVGNHGGSSAGETSAAMVFASPKFETAQLTETAETSPLPWTDTYKYHSRMDQTDLVPTLTALLGLNTPKNNLGVLVSQMLGLWSPEDQLNVLKNNADQMVQILQGQASRESDAKEVYELYDTLNSNPSVKDYYNFLYEAQSYLTHASSNYNTNDMLGGIGLGLLSTILALTVFSALTLAVQGLKRLYLIILLVYFISVFGSSTVEEEHQIWYWITSGWMAFLYISGSRNKFGDGFNWMFVQVFVRMMISWNQTGQKFTKKDDIVTWLSKDGNHPVLWILILVTYGVAFNKVWRYGFSKVESKLAFLLTLITTFASVGFKITQAWEAGEVVPAPLLYLMGLPGTLNEVNARMAGLARFAFSTIAAGSLYRVLSLAGTDKVNLIRDLHAFLTLFLITQSRIQNIPLFMVYYFLEIFLRKATNRSFIFSSRDIYQTEALFQKLVLVLSVSTLLLEQVSFFSMGNSNSMASIDLSNAYNGVTLYQIEFVGVLTFVSNWIGPLYWSTAGLSFLLEDHVRNAIFAKIAEKNNDVKLTTKLVQQALTLRVYVVLAFSSVAISAVMITCFFLREHLFIWTVFSPKLLYQFVWTVLQFALVDVILSSIFVVLVYRSV.

2 N-linked (GlcNAc...) asparagine glycosylation sites follow: Asn123 and Asn180. 8 helical membrane-spanning segments follow: residues 408–428, 438–458, 459–479, 487–506, 524–544, 555–575, 576–596, and 639–659; these read LGGIGLGLLSTILALTVFSAL, LYLIILLVYFISVFGSSTVEE, EHQIWYWITSGWMAFLYISGS, FNWMFVQVFVRMMISWNQTG, NHPVLWILILVTYGVAFNKVW, LAFLLTLITTFASVGFKITQA, WEAGEVVPAPLLYLMGLPGTL, and AFLTLFLITQSRIQNIPLFMV. Residue Asn672 is glycosylated (N-linked (GlcNAc...) asparagine). 4 helical membrane passes run 692 to 712, 736 to 756, 795 to 815, and 834 to 854; these read LVLVLSVSTLLLEQVSFFSMG, FVGVLTFVSNWIGPLYWSTAG, VYVVLAFSSVAISAVMITCFF, and FVWTVLQFALVDVILSSIFVV.

Belongs to the PIGG/PIGN/PIGO family. PIGG subfamily.

Its subcellular location is the endoplasmic reticulum membrane. Its pathway is glycolipid biosynthesis; glycosylphosphatidylinositol-anchor biosynthesis. Its function is as follows. Ethanolamine phosphate transferase involved in glycosylphosphatidylinositol-anchor biosynthesis. Transfers ethanolamine phosphate to the GPI second mannose. The chain is GPI ethanolamine phosphate transferase 2 (LAS21) from Yarrowia lipolytica (strain CLIB 122 / E 150) (Yeast).